The primary structure comprises 499 residues: Maturase K (499 aa).

This sequence belongs to the intron maturase 2 family. MatK subfamily.

It localises to the plastid. Its subcellular location is the chloroplast. Its function is as follows. Usually encoded in the trnK tRNA gene intron. Probably assists in splicing its own and other chloroplast group II introns. The polypeptide is Maturase K (Gleditsia triacanthos (Common honey-locust)).